A 68-amino-acid polypeptide reads, in one-letter code: Small ribosomal subunit protein bS21 (68 aa).

Residues 37 to 49 (EKPSEKRAREKAA) are compositionally biased toward basic and acidic residues. Residues 37 to 68 (EKPSEKRAREKAAAVRRARKMERKRMERDGIK) are disordered. Basic residues predominate over residues 50-59 (AVRRARKMER).

The protein belongs to the bacterial ribosomal protein bS21 family.

In Erythrobacter litoralis (strain HTCC2594), this protein is Small ribosomal subunit protein bS21.